The primary structure comprises 873 residues: Leucine--tRNA ligase (873 aa).

Positions 42–52 (PYPSGKLHMGH) match the 'HIGH' region motif. The tract at residues 624–643 (PVEIGGTEKMSKSKNNGVDP) is disordered. The 'KMSKS' region motif lies at 632–636 (KMSKS). Residue K635 participates in ATP binding.

It belongs to the class-I aminoacyl-tRNA synthetase family.

The protein localises to the cytoplasm. It catalyses the reaction tRNA(Leu) + L-leucine + ATP = L-leucyl-tRNA(Leu) + AMP + diphosphate. This Pseudomonas paraeruginosa (strain DSM 24068 / PA7) (Pseudomonas aeruginosa (strain PA7)) protein is Leucine--tRNA ligase.